A 345-amino-acid chain; its full sequence is Olfactory receptor 11G2 (345 aa).

Residues 1–62 are Extracellular-facing; the sequence is MHFLSQNDLN…LGFPCPREGQ (62 aa). N-linked (GlcNAc...) asparagine glycosylation is present at Asn-43. Residues 63–83 traverse the membrane as a helical segment; that stretch reads ILLFVLFTVVYLLTLMGNGSI. Residues 84 to 92 are Cytoplasmic-facing; it reads ICAVHWDQR. A helical membrane pass occupies residues 93–113; sequence LHAPMYILLANFSFLEICYVT. Residues 114-135 lie on the Extracellular side of the membrane; sequence STVPSMLANFLSDTKIISFSGC. The cysteines at positions 135 and 217 are disulfide-linked. A helical transmembrane segment spans residues 136-156; sequence FLQFYFFFSLGSTECFFLAVM. Residues 157–181 are Cytoplasmic-facing; sequence AFDRYLAICRPLRYPTIMTRRLCTN. Residues 182-202 traverse the membrane as a helical segment; it reads LVVNCWVLGFIWFLIPIVNIS. Residues 203–241 are Extracellular-facing; sequence QMSFCGSRIIDHFLCDPAPLLTLTCKKGPVIELVFSVLS. A helical membrane pass occupies residues 242–264; it reads PLPVFMLFLFIVGSYALVVRAVL. Topologically, residues 265-275 are cytoplasmic; that stretch reads RVPSAAGRRKA. The chain crosses the membrane as a helical span at residues 276–296; the sequence is FSTCGSHLAVVSLFYGSVLVM. Residues 297-309 are Extracellular-facing; sequence YGSPPSKNEAGKQ. Residues 310-330 form a helical membrane-spanning segment; sequence KTVTLFYSVVTPLLNPVIYSL. At 331–345 the chain is on the cytoplasmic side; that stretch reads RNKDMRKALKKFWGT.

Belongs to the G-protein coupled receptor 1 family.

The protein resides in the cell membrane. Its function is as follows. Odorant receptor. This chain is Olfactory receptor 11G2 (OR11G2), found in Homo sapiens (Human).